A 647-amino-acid polypeptide reads, in one-letter code: Threonine--tRNA ligase (647 aa).

Residues 1–61 (MINITFPDGA…TEDGSIEIVT (61 aa)) enclose the TGS domain. A catalytic region spans residues 242-540 (DHRKLGKELD…LIENYKGAFP (299 aa)). 3 residues coordinate Zn(2+): C336, H387, and H517.

It belongs to the class-II aminoacyl-tRNA synthetase family. Homodimer. Zn(2+) is required as a cofactor.

The protein localises to the cytoplasm. The enzyme catalyses tRNA(Thr) + L-threonine + ATP = L-threonyl-tRNA(Thr) + AMP + diphosphate + H(+). In terms of biological role, catalyzes the attachment of threonine to tRNA(Thr) in a two-step reaction: L-threonine is first activated by ATP to form Thr-AMP and then transferred to the acceptor end of tRNA(Thr). Also edits incorrectly charged L-seryl-tRNA(Thr). This chain is Threonine--tRNA ligase, found in Streptococcus pneumoniae serotype 2 (strain D39 / NCTC 7466).